Reading from the N-terminus, the 120-residue chain is ATP-dependent Clp protease adapter protein ClpS (120 aa).

This sequence belongs to the ClpS family. Binds to the N-terminal domain of the chaperone ClpA.

Its function is as follows. Involved in the modulation of the specificity of the ClpAP-mediated ATP-dependent protein degradation. The chain is ATP-dependent Clp protease adapter protein ClpS from Pseudomonas syringae pv. tomato (strain ATCC BAA-871 / DC3000).